Reading from the N-terminus, the 92-residue chain is Large ribosomal subunit protein eL42 (92 aa).

Zn(2+)-binding residues include C11, C14, C70, and C73. A C4-type zinc finger spans residues 11–73; sequence CPNCRKHTVH…LDLRLKCKEC (63 aa).

Belongs to the eukaryotic ribosomal protein eL42 family. Part of the 50S ribosomal subunit. Requires Zn(2+) as cofactor.

In terms of biological role, binds to the 23S rRNA. The polypeptide is Large ribosomal subunit protein eL42 (Methanothermobacter thermautotrophicus (strain ATCC 29096 / DSM 1053 / JCM 10044 / NBRC 100330 / Delta H) (Methanobacterium thermoautotrophicum)).